Consider the following 304-residue polypeptide: Lipoyl synthase (304 aa).

The disordered stretch occupies residues 1-21 (MAPELIQIDLEPRKPAPKPSW). 7 residues coordinate [4Fe-4S] cluster: cysteine 48, cysteine 53, cysteine 59, cysteine 74, cysteine 78, cysteine 81, and serine 287. The region spanning 60-276 (WNHKTATFML…KEEAMKMGFR (217 aa)) is the Radical SAM core domain.

Belongs to the radical SAM superfamily. Lipoyl synthase family. [4Fe-4S] cluster serves as cofactor.

The protein localises to the cytoplasm. The catalysed reaction is [[Fe-S] cluster scaffold protein carrying a second [4Fe-4S](2+) cluster] + N(6)-octanoyl-L-lysyl-[protein] + 2 oxidized [2Fe-2S]-[ferredoxin] + 2 S-adenosyl-L-methionine + 4 H(+) = [[Fe-S] cluster scaffold protein] + N(6)-[(R)-dihydrolipoyl]-L-lysyl-[protein] + 4 Fe(3+) + 2 hydrogen sulfide + 2 5'-deoxyadenosine + 2 L-methionine + 2 reduced [2Fe-2S]-[ferredoxin]. Its pathway is protein modification; protein lipoylation via endogenous pathway; protein N(6)-(lipoyl)lysine from octanoyl-[acyl-carrier-protein]: step 2/2. Functionally, catalyzes the radical-mediated insertion of two sulfur atoms into the C-6 and C-8 positions of the octanoyl moiety bound to the lipoyl domains of lipoate-dependent enzymes, thereby converting the octanoylated domains into lipoylated derivatives. The chain is Lipoyl synthase from Koribacter versatilis (strain Ellin345).